A 633-amino-acid polypeptide reads, in one-letter code: Molybdenum cofactor biosynthesis protein 1 (633 aa).

A molybdenum cofactor biosynthesis protein A region spans residues M1–I380. S61 is subject to Phosphoserine. The Radical SAM core domain maps to S61–R295. Position 70 (R70) interacts with GTP. Positions 77 and 81 each coordinate [4Fe-4S] cluster. Y83 is a binding site for S-adenosyl-L-methionine. C84 serves as a coordination point for [4Fe-4S] cluster. R120 contributes to the GTP binding site. G124 is an S-adenosyl-L-methionine binding site. T151 provides a ligand contact to GTP. S175 contacts S-adenosyl-L-methionine. K195 bears the N6-acetyllysine mark. Position 212 (K212) interacts with GTP. S-adenosyl-L-methionine is bound at residue M246. [4Fe-4S] cluster-binding residues include C309 and C312. R314–R316 lines the GTP pocket. C326 contacts [4Fe-4S] cluster. Residues V410 to T633 are molybdenum cofactor biosynthesis protein C. The tract at residues S446–T480 is disordered. K525 is subject to N6-acetyllysine. The For molybdenum cofactor biosynthesis protein C activity role is filled by D603.

It in the C-terminal section; belongs to the MoaC family. This sequence in the N-terminal section; belongs to the radical SAM superfamily. MoaA family. In terms of assembly, isoform MOCS1A and isoform MOCS1B probably form a heterooligomer. Requires [4Fe-4S] cluster as cofactor.

The catalysed reaction is GTP + AH2 + S-adenosyl-L-methionine = (8S)-3',8-cyclo-7,8-dihydroguanosine 5'-triphosphate + 5'-deoxyadenosine + L-methionine + A + H(+). It catalyses the reaction (8S)-3',8-cyclo-7,8-dihydroguanosine 5'-triphosphate = cyclic pyranopterin phosphate + diphosphate. The protein operates within cofactor biosynthesis; molybdopterin biosynthesis. Its function is as follows. Isoform MOCS1A and isoform MOCS1B probably form a complex that catalyzes the conversion of 5'-GTP to cyclic pyranopterin monophosphate (cPMP). MOCS1A catalyzes the cyclization of GTP to (8S)-3',8-cyclo-7,8-dihydroguanosine 5'-triphosphate and MOCS1B catalyzes the subsequent conversion of (8S)-3',8-cyclo-7,8-dihydroguanosine 5'-triphosphate to cPMP. This is Molybdenum cofactor biosynthesis protein 1 (MOCS1) from Bos taurus (Bovine).